Reading from the N-terminus, the 145-residue chain is D-aminoacyl-tRNA deacylase (145 aa).

Residues 137–138 (GP) carry the Gly-cisPro motif, important for rejection of L-amino acids motif.

This sequence belongs to the DTD family. As to quaternary structure, homodimer.

Its subcellular location is the cytoplasm. The enzyme catalyses glycyl-tRNA(Ala) + H2O = tRNA(Ala) + glycine + H(+). It catalyses the reaction a D-aminoacyl-tRNA + H2O = a tRNA + a D-alpha-amino acid + H(+). An aminoacyl-tRNA editing enzyme that deacylates mischarged D-aminoacyl-tRNAs. Also deacylates mischarged glycyl-tRNA(Ala), protecting cells against glycine mischarging by AlaRS. Acts via tRNA-based rather than protein-based catalysis; rejects L-amino acids rather than detecting D-amino acids in the active site. By recycling D-aminoacyl-tRNA to D-amino acids and free tRNA molecules, this enzyme counteracts the toxicity associated with the formation of D-aminoacyl-tRNA entities in vivo and helps enforce protein L-homochirality. This chain is D-aminoacyl-tRNA deacylase, found in Pseudomonas entomophila (strain L48).